We begin with the raw amino-acid sequence, 818 residues long: Adhesion G protein-coupled receptor E5 (818 aa).

The signal sequence occupies residues 1–23 (MRGVRCPGLLVVCILLSLSGAGT). At 24-533 (QKAESKNCAK…VQDPRLELIT (510 aa)) the chain is on the extracellular side. One can recognise an EGF-like 1 domain in the interval 27–68 (ESKNCAKWCPINSKCVSNRSCVCKPGFSSEKELITNPAESCE). Disulfide bonds link Cys31–Cys41, Cys35–Cys47, Cys49–Cys67, Cys73–Cys86, Cys80–Cys95, Cys97–Cys118, Cys169–Cys182, Cys176–Cys191, Cys193–Cys212, Cys218–Cys231, Cys225–Cys240, and Cys242–Cys260. N-linked (GlcNAc...) asparagine glycosylation occurs at Asn44. The region spanning 69–119 (DINECLLPGFSCGDFAMCKNSEGSYTCVCNLGYKLLSGAESFVNESENTCQ) is the EGF-like 2; calcium-binding domain. Residue Asn112 is glycosylated (N-linked (GlcNAc...) asparagine). Positions 165–213 (DVNECISGQNHCHQSTHCINKLGGYSCICRQGWKPVPGSPNGPVSTVCE) constitute an EGF-like 3; calcium-binding domain. Residues 214–261 (DVDECSSGQHQCHNSTVCKNTVGSYKCHCRPGWKPTSGSLRGPDTICQ) form the EGF-like 4; calcium-binding domain. A glycan (N-linked (GlcNAc...) asparagine) is linked at Asn227. 2 N-linked (GlcNAc...) asparagine glycosylation sites follow: Asn299 and Asn395. The GAIN-B domain maps to 347 to 525 (PFTYTSPSNT…AILMAQYHVQ (179 aa)). Ser425 is subject to Phosphoserine. N-linked (GlcNAc...) asparagine glycans are attached at residues Asn461 and Asn502. 2 disulfides stabilise this stretch: Cys482–Cys507 and Cys499–Cys509. Residues 482 to 525 (CAFWKAHNGNGYWDTDGCSMNGTGFCHCNHLTSFAILMAQYHVQ) form a GPS region. Residues 534 to 554 (KVGLLLSLICLLLCILTFLLV) form a helical membrane-spanning segment. Topologically, residues 555 to 562 (KPIQSSRT) are cytoplasmic. A helical membrane pass occupies residues 563–583 (MVHLHLCICLFLGSIIFLVGV). The Extracellular segment spans residues 584–602 (ENEGGEVGLRCRLVAMMLH). A helical membrane pass occupies residues 603 to 623 (FCFLAAFCWMALEGVELYFLV). Residues 624–637 (VRVFQGQGLSTWQR) are Cytoplasmic-facing. A helical membrane pass occupies residues 638-658 (CLIGYGVPLLIVAISMAVVKM). Residues 659-679 (DGYGHATYCWLDFRKQGFLWS) are Extracellular-facing. The helical transmembrane segment at 680-700 (FSGPVAFIIFCNAAIFVITVW) threads the bilayer. Topologically, residues 701 to 723 (KLTKKFSEINPNMKKLRKARVLT) are cytoplasmic. The helical transmembrane segment at 724 to 744 (ITAIAQLLVLGCTWGFGLFLF) threads the bilayer. Over 745-752 (NPHSTWLS) the chain is Extracellular. Residues 753–773 (YIFTLLNCLQGLFLYVMLCLL) traverse the membrane as a helical segment. At 774-818 (NKKVREEYWKWACMVTGSKYTEFNSSTTGTGTSQTRALRSSESGM) the chain is on the cytoplasmic side. Ser798 carries the post-translational modification Phosphoserine. The segment covering 799–808 (STTGTGTSQT) has biased composition (low complexity). The segment at 799-818 (STTGTGTSQTRALRSSESGM) is disordered. Thr808 carries the post-translational modification Phosphothreonine. The segment covering 809 to 818 (RALRSSESGM) has biased composition (polar residues). A phosphoserine mark is found at Ser814 and Ser816.

This sequence belongs to the G-protein coupled receptor 2 family. LN-TM7 subfamily. Forms a heterodimer, consisting of a large extracellular region (alpha subunit) non-covalently linked to a seven-transmembrane moiety (beta subunit). Interacts with complement decay-accelerating factor (DAF). The largest isoform (isoform 1) do not interact with DAF. Also interacts with chondroitin sulfate. Proteolytically cleaved into 2 subunits, an extracellular alpha subunit and a seven-transmembrane subunit. In terms of tissue distribution, although predominantly expressed by cells of the immune system, expressed ubiquitously with particularly high levels of expression in the lung and the thymus gland. In the spleen, expression is detected on most myeloid cells and variable portions of T-cells, B-cells and NK cells. In the bone marrow, expressed in nearly all myeloid cells, whereas little if any expression is found on erythroid cells.

The protein localises to the cell membrane. It is found in the secreted. Its subcellular location is the extracellular space. In terms of biological role, receptor potentially involved in both adhesion and signaling processes early after leukocyte activation. Plays an essential role in leukocyte migration. The polypeptide is Adhesion G protein-coupled receptor E5 (Mus musculus (Mouse)).